We begin with the raw amino-acid sequence, 346 residues long: NADH-ubiquinone oxidoreductase chain 2 (346 aa).

A run of 10 helical transmembrane segments spans residues 25–45 (NLLL…PLLA), 56–76 (ATKY…VIIL), 94–114 (LLNM…FHYW), 122–142 (IPLH…LSIL), 148–168 (LLNP…GAWG), 178–198 (IMAY…PYNP), 200–220 (LTLL…ITLM), 240–260 (ILTM…LTGF), 278–298 (LSTL…RLIY), and 325–345 (FILP…SQLI).

This sequence belongs to the complex I subunit 2 family. In terms of assembly, core subunit of respiratory chain NADH dehydrogenase (Complex I) which is composed of 45 different subunits. Interacts with TMEM242.

The protein localises to the mitochondrion inner membrane. The catalysed reaction is a ubiquinone + NADH + 5 H(+)(in) = a ubiquinol + NAD(+) + 4 H(+)(out). In terms of biological role, core subunit of the mitochondrial membrane respiratory chain NADH dehydrogenase (Complex I) which catalyzes electron transfer from NADH through the respiratory chain, using ubiquinone as an electron acceptor. Essential for the catalytic activity and assembly of complex I. In Rattus norvegicus (Rat), this protein is NADH-ubiquinone oxidoreductase chain 2.